Reading from the N-terminus, the 189-residue chain is Glutathione-dependent formaldehyde-activating enzyme (189 aa).

Residues 20 to 167 enclose the CENP-V/GFA domain; it reads FAGGTLVCKC…LKELGLEPYD (148 aa). Zn(2+) is bound by residues Cys27, Cys29, Cys48, Cys50, Cys53, Cys95, and Cys98.

It belongs to the Gfa family. The cofactor is Zn(2+).

The catalysed reaction is S-(hydroxymethyl)glutathione = glutathione + formaldehyde. It participates in one-carbon metabolism; formaldehyde degradation; formate from formaldehyde (glutathione route): step 1/3. Catalyzes the condensation of formaldehyde and glutathione to S-hydroxymethylglutathione. In Rhodopseudomonas palustris (strain BisB18), this protein is Glutathione-dependent formaldehyde-activating enzyme.